A 189-amino-acid chain; its full sequence is GTP cyclohydrolase 1 (189 aa).

Zn(2+)-binding residues include cysteine 78, histidine 81, and cysteine 150.

This sequence belongs to the GTP cyclohydrolase I family. In terms of assembly, homomer.

It catalyses the reaction GTP + H2O = 7,8-dihydroneopterin 3'-triphosphate + formate + H(+). It functions in the pathway cofactor biosynthesis; 7,8-dihydroneopterin triphosphate biosynthesis; 7,8-dihydroneopterin triphosphate from GTP: step 1/1. The protein is GTP cyclohydrolase 1 of Lysinibacillus sphaericus (strain C3-41).